The chain runs to 395 residues: XK-related protein 8 (395 aa).

The Cytoplasmic segment spans residues Met1 to Asp12. Residues Leu13–Ala33 form a helical membrane-spanning segment. Topologically, residues Ala34–Ala47 are extracellular. A helical membrane pass occupies residues Leu48 to Leu68. The Cytoplasmic segment spans residues Arg69–Arg158. Residues Ala159 to Leu179 form a helical membrane-spanning segment. At Asp180 to Ser200 the chain is on the extracellular side. The chain crosses the membrane as a helical span at residues Val201–Phe221. Residues Ser222–Ala223 lie on the Cytoplasmic side of the membrane. A helical transmembrane segment spans residues Leu224 to Val244. Residues Trp245 to Glu258 are Extracellular-facing. The helical transmembrane segment at Trp259–Gly279 threads the bilayer. Residues Arg280–Arg284 are Cytoplasmic-facing. A helical membrane pass occupies residues Ala285–Thr305. Residues His306 to Ser312 are Extracellular-facing. The chain crosses the membrane as a helical span at residues Gly313–Leu333. Residues Arg334 to Gly395 are Cytoplasmic-facing. Ser362 is modified (phosphoserine). Residue Thr375 is modified to Phosphothreonine.

It belongs to the XK family. As to quaternary structure, interacts with BSG and NPTN; which act as chaperones to localize XKR8 at the cell membrane. In terms of assembly, homodimer. In terms of processing, undergoes proteolytic processing by caspase-3 (CASP3), leading to its activation. Phosphorylation at Thr-375 activates the phospholipid scramblase activity.

It localises to the cell membrane. The protein resides in the cytoplasm. The protein localises to the perinuclear region. The enzyme catalyses a 1,2-diacyl-sn-glycero-3-phospho-L-serine(in) = a 1,2-diacyl-sn-glycero-3-phospho-L-serine(out). Activated upon caspase cleavage to generate the XK-related protein 8, processed form. Does not act prior the onset of apoptosis. Phospholipid scramblase that promotes phosphatidylserine exposure on apoptotic cell surface. Phosphatidylserine is a specific marker only present at the surface of apoptotic cells and acts as a specific signal for engulfment. Required for the clearance of apoptotic cells, such as engulfment of apoptotic germ cells by Sertoli cells, clearance of senescent neutrophils or regulation of bipolar cell numbers in the retina. Has no effect on calcium-induced exposure of phosphatidylserine. Promotes myoblast differentiation and survival. This Pan troglodytes (Chimpanzee) protein is XK-related protein 8.